Reading from the N-terminus, the 418-residue chain is MIDLKFLRENPDAVRESQRTRGEDPALVDALLEADASRRAAVLAGDNLRAEQKAFGKKVGQASPEERPALLEGSKELAAKVKQAEAEQHEAQAALDAAHRAISNVVQEGAPAGGEDDFVTLETVGDIPAFDFEPKDHLELGESLGLIDMERGAKVSGARFYFLTGFGAMLQLGMLQLAAQKAMANGFQMMIPPVLVRPEIMAGTGFLGAHADEVYHLADDDLYLVGTSEVPLAGYHSGEILDLADGPKRYAGWSTCFRREAGSYGKDTRGIIRVHQFDKVEMFTYCKPEDADAEHQRLLAWEREMLAAIDVPYRVIDVAGGDLGSSAARKFDCEAWVPTQQAYRELTSTSNCTTFQARRLGVRYRDENGKPQTAATLNGTLATTRWIVAILENHQQSDGTVRVPEALVPFVGTDVLKP.

227 to 229 (TSE) contributes to the L-serine binding site. ATP-binding positions include 258 to 260 (RRE) and valine 274. Glutamate 281 provides a ligand contact to L-serine. 345-348 (ELTS) provides a ligand contact to ATP. Threonine 380 serves as a coordination point for L-serine.

Belongs to the class-II aminoacyl-tRNA synthetase family. Type-1 seryl-tRNA synthetase subfamily. In terms of assembly, homodimer. The tRNA molecule binds across the dimer.

It localises to the cytoplasm. It carries out the reaction tRNA(Ser) + L-serine + ATP = L-seryl-tRNA(Ser) + AMP + diphosphate + H(+). It catalyses the reaction tRNA(Sec) + L-serine + ATP = L-seryl-tRNA(Sec) + AMP + diphosphate + H(+). It participates in aminoacyl-tRNA biosynthesis; selenocysteinyl-tRNA(Sec) biosynthesis; L-seryl-tRNA(Sec) from L-serine and tRNA(Sec): step 1/1. Catalyzes the attachment of serine to tRNA(Ser). Is also able to aminoacylate tRNA(Sec) with serine, to form the misacylated tRNA L-seryl-tRNA(Sec), which will be further converted into selenocysteinyl-tRNA(Sec). In Rhodococcus jostii (strain RHA1), this protein is Serine--tRNA ligase.